The following is a 599-amino-acid chain: Fumarate reductase flavoprotein subunit (599 aa).

Residues 12 to 16, 36 to 38, 44 to 52, 156 to 158, and D212 each bind FAD; these read GAGGG, VSK, THTVAAEGG, and HFV. Residue H45 is modified to Tele-8alpha-FAD histidine. Catalysis depends on residues H233 and R249. FAD is bound by residues 357-358, E381, and 392-398; these read HY and RLGSNSL.

This sequence belongs to the FAD-dependent oxidoreductase 2 family. FRD/SDH subfamily. In terms of assembly, part of an enzyme complex containing four subunits: a flavoprotein (FrdA), an iron-sulfur protein (FrdB), and two hydrophobic anchor proteins (FrdC and FrdD). The cofactor is FAD.

Its subcellular location is the cell inner membrane. The catalysed reaction is a quinone + succinate = fumarate + a quinol. It catalyses the reaction a menaquinone + succinate = a menaquinol + fumarate. This Haemophilus influenzae (strain ATCC 51907 / DSM 11121 / KW20 / Rd) protein is Fumarate reductase flavoprotein subunit (frdA).